The chain runs to 118 residues: Holo-[acyl-carrier-protein] synthase (118 aa).

Asp8 and Glu58 together coordinate Mg(2+).

It belongs to the P-Pant transferase superfamily. AcpS family. Mg(2+) is required as a cofactor.

The protein resides in the cytoplasm. The catalysed reaction is apo-[ACP] + CoA = holo-[ACP] + adenosine 3',5'-bisphosphate + H(+). In terms of biological role, transfers the 4'-phosphopantetheine moiety from coenzyme A to a Ser of acyl-carrier-protein. This is Holo-[acyl-carrier-protein] synthase from Streptococcus uberis (strain ATCC BAA-854 / 0140J).